The following is a 629-amino-acid chain: Phosphomethylpyrimidine synthase (629 aa).

The interval 1–21 (MSIKAKNAAHLRESAQVDSGS) is disordered. Substrate contacts are provided by residues Asn233, Met262, Tyr291, His327, 347–349 (SRG), 388–391 (DGLR), and Glu427. His431 is a Zn(2+) binding site. A substrate-binding site is contributed by Tyr454. His495 provides a ligand contact to Zn(2+). Residues Cys575, Cys578, and Cys583 each contribute to the [4Fe-4S] cluster site.

This sequence belongs to the ThiC family. As to quaternary structure, homodimer. The cofactor is [4Fe-4S] cluster.

It carries out the reaction 5-amino-1-(5-phospho-beta-D-ribosyl)imidazole + S-adenosyl-L-methionine = 4-amino-2-methyl-5-(phosphooxymethyl)pyrimidine + CO + 5'-deoxyadenosine + formate + L-methionine + 3 H(+). It functions in the pathway cofactor biosynthesis; thiamine diphosphate biosynthesis. In terms of biological role, catalyzes the synthesis of the hydroxymethylpyrimidine phosphate (HMP-P) moiety of thiamine from aminoimidazole ribotide (AIR) in a radical S-adenosyl-L-methionine (SAM)-dependent reaction. This chain is Phosphomethylpyrimidine synthase, found in Pseudomonas syringae pv. syringae (strain B728a).